Consider the following 418-residue polypeptide: Actin-related protein 3 (418 aa).

An N-acetylalanine modification is found at alanine 2. N6-acetyllysine occurs at positions 240, 244, 251, and 254.

It belongs to the actin family. ARP3 subfamily. Component of the Arp2/3 complex composed of ACTR2/ARP2, ACTR3/ARP3, ARPC1B/p41-ARC, ARPC2/p34-ARC, ARPC3/p21-ARC, ARPC4/p20-ARC and ARPC5/p16-ARC. Interacts with WHDC1. Interacts weakly with MEFV. Interacts with AVIL. As to quaternary structure, (Microbial infection) Interacts with bacterium B.thailandensis BimA.

Its subcellular location is the cytoplasm. The protein localises to the cytoskeleton. The protein resides in the cell projection. It localises to the nucleus. Functionally, ATP-binding component of the Arp2/3 complex, a multiprotein complex that mediates actin polymerization upon stimulation by nucleation-promoting factor (NPF). The Arp2/3 complex mediates the formation of branched actin networks in the cytoplasm, providing the force for cell motility. Seems to contact the pointed end of the daughter actin filament. In podocytes, required for the formation of lamellipodia downstream of AVIL and PLCE1 regulation. In addition to its role in the cytoplasmic cytoskeleton, the Arp2/3 complex also promotes actin polymerization in the nucleus, thereby regulating gene transcription and repair of damaged DNA. The Arp2/3 complex promotes homologous recombination (HR) repair in response to DNA damage by promoting nuclear actin polymerization, leading to drive motility of double-strand breaks (DSBs). Plays a role in ciliogenesis. The polypeptide is Actin-related protein 3 (Actr3) (Mus musculus (Mouse)).